The primary structure comprises 464 residues: Cysteine--tRNA ligase (464 aa).

C30 is a Zn(2+) binding site. The 'HIGH' region signature appears at 32–42; sequence MTVYDYCHIGH. Residues C214, H239, and E243 each contribute to the Zn(2+) site. The 'KMSKS' region motif lies at 271 to 275; it reads KMSKS. Position 274 (K274) interacts with ATP.

The protein belongs to the class-I aminoacyl-tRNA synthetase family. Monomer. The cofactor is Zn(2+).

It localises to the cytoplasm. It catalyses the reaction tRNA(Cys) + L-cysteine + ATP = L-cysteinyl-tRNA(Cys) + AMP + diphosphate. In Janthinobacterium sp. (strain Marseille) (Minibacterium massiliensis), this protein is Cysteine--tRNA ligase.